Reading from the N-terminus, the 380-residue chain is Cystathionine beta-lyase (380 aa).

Lys196 carries the post-translational modification N6-(pyridoxal phosphate)lysine.

Belongs to the trans-sulfuration enzymes family. Pyridoxal 5'-phosphate is required as a cofactor.

Its subcellular location is the cytoplasm. The catalysed reaction is L,L-cystathionine + H2O = L-homocysteine + pyruvate + NH4(+). It carries out the reaction an S-substituted L-cysteine + H2O = a thiol + pyruvate + NH4(+). The protein operates within amino-acid biosynthesis; L-methionine biosynthesis via de novo pathway; L-homocysteine from L-cystathionine: step 1/1. Functionally, the enzymatic degradation of amino acids in cheese is believed to generate aroma compounds and therefore to be essential for flavor development. Cystathionine beta-lyase (CBL) can convert cystathionine to homocysteine but is also able to catalyze an alpha, gamma elimination. With methionine as a substrate, it produces volatile sulfur compounds which are important for flavor formation in Gouda cheese. This Lactococcus lactis subsp. lactis (strain IL1403) (Streptococcus lactis) protein is Cystathionine beta-lyase (metC).